A 465-amino-acid polypeptide reads, in one-letter code: MTALFQQLPSVDKILKTPQGEQLVTEFGHSAVVNCCRHLLAQAREKIKIEKKLPHFFTDFNHTIAEVNRYLANQQQVKIKSVHNLTGTVLHTNLGRALWAQSAQQAALTAMRQNVALEYDLEAGKRSHRDNYVSELLHELTGAQAACVVNNNAAAVLLMLATFAQGKEVIISRGELIEIGGAFRIPDIMAQAGCKLVEVGTTNRTHLNDYRRAINENTALLMKVHSSNYQICGFTCEVSEQELVELGKEFNIPVVTDLGSGALTDLSRYDLPKEPTVQEKLVQGADLISFSGDKLLGGPQAGIIVGKKELIQQLQSHPLKRVLRCDKVILAAMEATLRLYLQPEKLTEKLTSLRLLTQPLEQLRQQAEQLKAKLENLLKDDFLLQIESSLAQIGSGSQPMAKIPSIAVTIAEKNSEKLTALLARFKKLSTPIIARVENDKIRLDLRSVTAIETLLITLEELNQDQ.

Lys294 bears the N6-(pyridoxal phosphate)lysine mark.

Belongs to the SelA family. Pyridoxal 5'-phosphate is required as a cofactor.

The protein localises to the cytoplasm. The enzyme catalyses L-seryl-tRNA(Sec) + selenophosphate + H(+) = L-selenocysteinyl-tRNA(Sec) + phosphate. It functions in the pathway aminoacyl-tRNA biosynthesis; selenocysteinyl-tRNA(Sec) biosynthesis; selenocysteinyl-tRNA(Sec) from L-seryl-tRNA(Sec) (bacterial route): step 1/1. Functionally, converts seryl-tRNA(Sec) to selenocysteinyl-tRNA(Sec) required for selenoprotein biosynthesis. The chain is L-seryl-tRNA(Sec) selenium transferase from Mannheimia succiniciproducens (strain KCTC 0769BP / MBEL55E).